The chain runs to 310 residues: Ferredoxin--NADP reductase (310 aa).

Residues D26, Q34, Y39, V78, F108, D268, and T308 each contribute to the FAD site.

The protein belongs to the ferredoxin--NADP reductase type 2 family. As to quaternary structure, homodimer. It depends on FAD as a cofactor.

It carries out the reaction 2 reduced [2Fe-2S]-[ferredoxin] + NADP(+) + H(+) = 2 oxidized [2Fe-2S]-[ferredoxin] + NADPH. The chain is Ferredoxin--NADP reductase from Lactobacillus helveticus (strain DPC 4571).